A 467-amino-acid chain; its full sequence is Translation initiation factor eIF2B subunit delta (467 aa).

The interval 1 to 106 (MGFSAEQAKK…QNPQNSPETD (106 aa)) is disordered. Phosphoserine is present on residues Ser-16, Ser-19, Ser-21, and Ser-23. Positions 16-37 (SPVSESSSVGGTSPATASSVVS) are enriched in polar residues. Residue Thr-27 is modified to Phosphothreonine. Phosphoserine is present on residues Ser-28 and Ser-37. Residues 51 to 61 (LKKARKQASRR) show a composition bias toward basic residues. Over residues 84-102 (PNKNSNQQKKASKQNPQNS) the composition is skewed to low complexity.

Belongs to the eIF-2B alpha/beta/delta subunits family. In terms of assembly, component of the translation initiation factor 2B (eIF2B) complex which is a heterodecamer of two sets of five different subunits: alpha, beta, gamma, delta and epsilon. Subunits alpha, beta and delta comprise a regulatory subcomplex and subunits epsilon and gamma comprise a catalytic subcomplex. Within the complex, the hexameric regulatory complex resides at the center, with the two heterodimeric catalytic subcomplexes bound on opposite sides.

Its subcellular location is the cytoplasm. It is found in the cytosol. Functionally, acts as a component of the translation initiation factor 2B (eIF2B) complex, which catalyzes the exchange of GDP for GTP on the eukaryotic initiation factor 2 (eIF2) complex gamma subunit. Its guanine nucleotide exchange factor activity is repressed when bound to eIF2 complex phosphorylated on the alpha subunit, thereby limiting the amount of methionyl-initiator methionine tRNA available to the ribosome and consequently global translation is repressed. The polypeptide is Translation initiation factor eIF2B subunit delta (tif224) (Schizosaccharomyces pombe (strain 972 / ATCC 24843) (Fission yeast)).